We begin with the raw amino-acid sequence, 127 residues long: Large ribosomal subunit protein bL19 (127 aa).

This sequence belongs to the bacterial ribosomal protein bL19 family.

In terms of biological role, this protein is located at the 30S-50S ribosomal subunit interface and may play a role in the structure and function of the aminoacyl-tRNA binding site. The protein is Large ribosomal subunit protein bL19 of Trichodesmium erythraeum (strain IMS101).